The following is a 342-amino-acid chain: Endolytic peptidoglycan transglycosylase RlpA (342 aa).

Residues 1–26 (MSKRVRSSLILPAVCGLGLAAVLLSS) form the signal peptide. A lipid anchor (N-palmitoyl cysteine) is attached at C27. Residue C27 is the site of S-diacylglycerol cysteine attachment. In terms of domain architecture, SPOR spans 261-342 (SLPADGLYLQ…LGQPTLVRPD (82 aa)).

The protein belongs to the RlpA family.

Its subcellular location is the cell membrane. In terms of biological role, lytic transglycosylase with a strong preference for naked glycan strands that lack stem peptides. The sequence is that of Endolytic peptidoglycan transglycosylase RlpA from Pseudomonas aeruginosa (strain ATCC 15692 / DSM 22644 / CIP 104116 / JCM 14847 / LMG 12228 / 1C / PRS 101 / PAO1).